A 316-amino-acid polypeptide reads, in one-letter code: Prenytransferase adrG (316 aa).

A run of 7 helical transmembrane segments spans residues 36–56 (LLGF…CASI), 60–80 (KIPI…SIFL), 131–151 (VLIY…FFAL), 163–183 (PQIT…SLGL), 191–211 (PTVC…VIYS), 247–267 (GFLA…VVSV), and 294–314 (KSAF…EYCL).

The protein belongs to the UbiA prenyltransferase family. The cofactor is Mg(2+).

It is found in the membrane. It carries out the reaction 3,5-dimethylorsellinate + (2E,6E)-farnesyl diphosphate = (3R)-3-farnesyl-6-hydroxy-2,3,5-trimethyl-4-oxocyclohexa-1,5-diene-1-carboxylate + diphosphate + H(+). It participates in secondary metabolite biosynthesis; terpenoid biosynthesis. Prenytransferase; part of the gene cluster that mediates the biosynthesis of andrastins, meroterpenoid compounds that exhibit inhibitory activity against ras farnesyltransferase, suggesting that they could be promising leads for antitumor agents. The first step of the pathway is the synthesis of 3,5-dimethylorsellinic acid (DMOA) by the polyketide synthase adrD via condensation of one acetyl-CoA starter unit with 3 malonyl-CoA units and 2 methylations. DMAO is then converted to farnesyl-DMAO by the prenyltransferase adrG. The methyltransferase adrK catalyzes the methylation of the carboxyl group of farnesyl-DMAO to farnesyl-DMAO methyl ester which is further converted to epoxyfarnesyl-DMAO methyl ester by the FAD-dependent monooxygenase adrH. The terpene cyclase adrI then catalyzes the carbon skeletal rearrangement to generate the andrastin E, the first compound in the pathway having the andrastin scaffold, with the tetracyclic ring system. The post-cyclization tailoring enzymes adrF, adrE, adrJ, and adrA, are involved in the conversion of andrastin E into andrastin A. The short chain dehydrogenase adrF is responsible for the oxidation of the C-3 a hydroxyl group of andrastin E to yield the corresponding ketone, andrastin D. The ketoreductase adrE stereoselectively reduces the carbonyl moiety to reverse the stereochemistry of the C-3 position to yield andrastin F. The acetyltransferase adrJ is the acetyltransferase that attaches the acetyl group to the C-3 hydroxyl group of andrastin F to yield andrastin C. Finally, the cytochrome P450 monooxygenase adrA catalyzes two sequential oxidation reactions of the C-23 methyl group, to generate the corresponding alcohol andrastin B, and aldehyde andrastin A. This chain is Prenytransferase adrG, found in Penicillium roqueforti.